Here is a 202-residue protein sequence, read N- to C-terminus: Imidazoleglycerol-phosphate dehydratase (202 aa).

Belongs to the imidazoleglycerol-phosphate dehydratase family.

It localises to the cytoplasm. The catalysed reaction is D-erythro-1-(imidazol-4-yl)glycerol 3-phosphate = 3-(imidazol-4-yl)-2-oxopropyl phosphate + H2O. The protein operates within amino-acid biosynthesis; L-histidine biosynthesis; L-histidine from 5-phospho-alpha-D-ribose 1-diphosphate: step 6/9. The polypeptide is Imidazoleglycerol-phosphate dehydratase (Brucella abortus (strain S19)).